The primary structure comprises 276 residues: 2-dehydro-3-deoxyphosphooctonate aldolase (276 aa).

It belongs to the KdsA family.

It is found in the cytoplasm. The catalysed reaction is D-arabinose 5-phosphate + phosphoenolpyruvate + H2O = 3-deoxy-alpha-D-manno-2-octulosonate-8-phosphate + phosphate. It participates in carbohydrate biosynthesis; 3-deoxy-D-manno-octulosonate biosynthesis; 3-deoxy-D-manno-octulosonate from D-ribulose 5-phosphate: step 2/3. It functions in the pathway bacterial outer membrane biogenesis; lipopolysaccharide biosynthesis. The chain is 2-dehydro-3-deoxyphosphooctonate aldolase from Xylella fastidiosa (strain M23).